Reading from the N-terminus, the 345-residue chain is Alpha-2-HS-glycoprotein (345 aa).

Residues 1-18 (MKSLVLLLCFAQLWGCQS) form the signal peptide. The 115-residue stretch at 19 to 133 (APQGTGLGFR…QFRVMHTQCH (115 aa)) folds into the Cystatin fetuin-A-type 1 domain. Disulfide bonds link Cys-32–Cys-336, Cys-89–Cys-100, Cys-114–Cys-132, Cys-146–Cys-149, Cys-208–Cys-219, and Cys-230–Cys-247. The N-linked (GlcNAc...) asparagine glycan is linked to Asn-99. Ser-134 carries the post-translational modification Phosphoserine. Thr-135 carries the phosphothreonine modification. A Phosphoserine modification is found at Ser-138. Positions 144–250 (KLCPRCPLLT…EEVSVACKLF (107 aa)) constitute a Cystatin fetuin-A-type 2 domain. N-linked (GlcNAc...) asparagine glycosylation is found at Asn-156 and Asn-176. Phosphoserine occurs at positions 305, 309, 312, and 314. The disordered stretch occupies residues 312–334 (SASGETLHSPKVGQPGAAGPVSP).

This sequence belongs to the fetuin family. Phosphorylated by FAM20C in the extracellular medium. Liver is the major site of synthesis, but fetuin is also expressed in limb buds and other extrahepatic tissues during development.

Its subcellular location is the secreted. Probably involved in differentiation. Its function is as follows. (Microbial infection) Facilitates invasion of hepatocytes by Plasmodium berghei sporozoites. This is Alpha-2-HS-glycoprotein (Ahsg) from Mus musculus (Mouse).